The primary structure comprises 82 residues: ATP synthase subunit c, chloroplastic (82 aa).

2 helical membrane passes run 3-23 and 57-77; these read PLIA…ASIG and LAFM…LLFA.

Belongs to the ATPase C chain family. In terms of assembly, F-type ATPases have 2 components, F(1) - the catalytic core - and F(0) - the membrane proton channel. F(1) has five subunits: alpha(3), beta(3), gamma(1), delta(1), epsilon(1). F(0) has four main subunits: a(1), b(1), b'(1) and c(10-14). The alpha and beta chains form an alternating ring which encloses part of the gamma chain. F(1) is attached to F(0) by a central stalk formed by the gamma and epsilon chains, while a peripheral stalk is formed by the delta, b and b' chains.

It is found in the plastid. The protein localises to the chloroplast thylakoid membrane. In terms of biological role, f(1)F(0) ATP synthase produces ATP from ADP in the presence of a proton or sodium gradient. F-type ATPases consist of two structural domains, F(1) containing the extramembraneous catalytic core and F(0) containing the membrane proton channel, linked together by a central stalk and a peripheral stalk. During catalysis, ATP synthesis in the catalytic domain of F(1) is coupled via a rotary mechanism of the central stalk subunits to proton translocation. Key component of the F(0) channel; it plays a direct role in translocation across the membrane. A homomeric c-ring of between 10-14 subunits forms the central stalk rotor element with the F(1) delta and epsilon subunits. The chain is ATP synthase subunit c, chloroplastic from Nephroselmis olivacea (Green alga).